A 273-amino-acid polypeptide reads, in one-letter code: NAD-dependent protein deacylase (273 aa).

The region spanning 20–272 (RERLRQRIFF…PEFVEKLLKG (253 aa)) is the Deacetylase sirtuin-type domain. 48-67 (GAGISAESGIRTFRAADGLW) lines the NAD(+) pocket. Positions 92 and 95 each coordinate substrate. 129–132 (QNID) lines the NAD(+) pocket. His-147 (proton acceptor) is an active-site residue. Residues Cys-155 and Cys-174 each coordinate Zn(2+). NAD(+) contacts are provided by residues 214 to 216 (GTS), 240 to 242 (NLE), and Ala-258.

It belongs to the sirtuin family. Class III subfamily. It depends on Zn(2+) as a cofactor.

The protein resides in the cytoplasm. It carries out the reaction N(6)-acetyl-L-lysyl-[protein] + NAD(+) + H2O = 2''-O-acetyl-ADP-D-ribose + nicotinamide + L-lysyl-[protein]. The catalysed reaction is N(6)-succinyl-L-lysyl-[protein] + NAD(+) + H2O = 2''-O-succinyl-ADP-D-ribose + nicotinamide + L-lysyl-[protein]. The enzyme catalyses N(6)-(2-hydroxyisobutanoyl)-L-lysyl-[protein] + NAD(+) + H2O = 2''-O-(2-hydroxyisobutanoyl)-ADP-D-ribose + nicotinamide + L-lysyl-[protein]. Its function is as follows. NAD-dependent lysine deacetylase that specifically removes acetyl groups on target proteins. Also acts as a protein-lysine deacylase by mediating protein desuccinylation and de-2-hydroxyisobutyrylation. Modulates the activities of several proteins which are inactive in their acylated form. The protein is NAD-dependent protein deacylase of Escherichia coli O6:H1 (strain CFT073 / ATCC 700928 / UPEC).